Consider the following 344-residue polypeptide: tRNA-specific 2-thiouridylase MnmA (344 aa).

ATP is bound by residues 9–16 (AMSGGVDS) and Met34. Cys92 serves as the catalytic Nucleophile. A disulfide bridge links Cys92 with Cys188. Position 116 (Gly116) interacts with ATP. Residues 138–140 (KDQ) are interaction with tRNA. The active-site Cysteine persulfide intermediate is the Cys188.

It belongs to the MnmA/TRMU family.

It is found in the cytoplasm. It catalyses the reaction S-sulfanyl-L-cysteinyl-[protein] + uridine(34) in tRNA + AH2 + ATP = 2-thiouridine(34) in tRNA + L-cysteinyl-[protein] + A + AMP + diphosphate + H(+). Functionally, catalyzes the 2-thiolation of uridine at the wobble position (U34) of tRNA, leading to the formation of s(2)U34. The chain is tRNA-specific 2-thiouridylase MnmA from Desulfotalea psychrophila (strain LSv54 / DSM 12343).